Here is a 172-residue protein sequence, read N- to C-terminus: Peptidyl-prolyl cis-trans isomerase (172 aa).

Positions 7-170 constitute a PPIase cyclophilin-type domain; the sequence is FFDMAIAGNP…RPVTIADCGQ (164 aa).

It belongs to the cyclophilin-type PPIase family. In terms of tissue distribution, expressed in meristematic tissues, with higher levels in nodules.

It is found in the cytoplasm. It catalyses the reaction [protein]-peptidylproline (omega=180) = [protein]-peptidylproline (omega=0). Its activity is regulated as follows. Binds cyclosporin A (CsA). CsA mediates some of its effects via an inhibitory action on PPIase. PPIases accelerate the folding of proteins. It catalyzes the cis-trans isomerization of proline imidic peptide bonds in oligopeptides. The polypeptide is Peptidyl-prolyl cis-trans isomerase (Lupinus luteus (European yellow lupine)).